Reading from the N-terminus, the 338-residue chain is Ribonucleoside-diphosphate reductase small subunit (338 aa).

Fe cation is bound by residues Asp81, Glu112, and His115. Tyr119 is a catalytic residue. Fe cation-binding residues include Glu174, Glu208, and His211.

Belongs to the ribonucleoside diphosphate reductase small chain family. Heterodimer of a large and a small subunit. The cofactor is Fe cation.

The protein localises to the cytoplasm. The enzyme catalyses a 2'-deoxyribonucleoside 5'-diphosphate + [thioredoxin]-disulfide + H2O = a ribonucleoside 5'-diphosphate + [thioredoxin]-dithiol. Provides the precursors necessary for DNA synthesis. Catalyzes the biosynthesis of deoxyribonucleotides from the corresponding ribonucleotides. The protein is Ribonucleoside-diphosphate reductase small subunit (rnrB-1) of Dictyostelium discoideum (Social amoeba).